The following is a 442-amino-acid chain: D-serine dehydratase (442 aa).

Lys118 is subject to N6-(pyridoxal phosphate)lysine.

Belongs to the serine/threonine dehydratase family. DsdA subfamily. In terms of assembly, monomer. It depends on pyridoxal 5'-phosphate as a cofactor.

The catalysed reaction is D-serine = pyruvate + NH4(+). In Shigella flexneri, this protein is D-serine dehydratase.